Here is a 525-residue protein sequence, read N- to C-terminus: Neuropilin and tolloid-like protein 2 (525 aa).

An N-terminal signal peptide occupies residues 1 to 22 (MALERLCSVLKVLLITVLVVEG). Over 23–347 (IAVAQKTQDG…GVFEQITKTH (325 aa)) the chain is Extracellular. Intrachain disulfides connect cysteine 45/cysteine 72, cysteine 100/cysteine 122, cysteine 177/cysteine 207, cysteine 234/cysteine 256, cysteine 297/cysteine 309, cysteine 304/cysteine 322, and cysteine 316/cysteine 331. CUB domains lie at 45–159 (CGIW…YSFI) and 177–292 (CQFE…FTSF). The region spanning 296 to 332 (PCTSSTFFCHSNMCINNSLVCNGVQNCAYPWDENHCK) is the LDL-receptor class A domain. Asparagine 311 carries an N-linked (GlcNAc...) asparagine glycan. A helical membrane pass occupies residues 348–368 (GTIIGITSGIVLVLLIISILV). Over 369–525 (QVKQPRKKVM…SAQASISIDF (157 aa)) the chain is Cytoplasmic. Serine 409 bears the Phosphoserine mark.

Interacts with GRIK2 and GRIK3, but neither with AMPA-nor with NMDA-sensitive glutamate receptors. Post-translationally, N-glycosylated.

The protein localises to the membrane. In terms of biological role, accessory subunit of neuronal kainate-sensitive glutamate receptors, GRIK2 and GRIK3. Increases kainate-receptor channel activity, slowing the decay kinetics of the receptors, without affecting their expression at the cell surface, and increasing the open probability of the receptor channels. Modulates the agonist sensitivity of kainate receptors. Slows the decay of kainate receptor-mediated excitatory postsynaptic currents (EPSCs), thus directly influencing synaptic transmission. The chain is Neuropilin and tolloid-like protein 2 (NETO2) from Homo sapiens (Human).